The primary structure comprises 293 residues: Protease HtpX homolog (293 aa).

A run of 2 helical transmembrane segments spans residues 4–24 and 40–60; these read VILFLITNLAVMLVLSATLRI and ALLMFSLVVGFTGSFISLLIS. Residue His-146 coordinates Zn(2+). Glu-147 is a catalytic residue. Residue His-150 coordinates Zn(2+). Transmembrane regions (helical) follow at residues 161 to 181 and 198 to 218; these read LIQGVVNTFVVFLARVVGYFV and VTVIVCEIVFGVLASIIVAWF. Glu-223 serves as a coordination point for Zn(2+).

Belongs to the peptidase M48B family. Requires Zn(2+) as cofactor.

It localises to the cell inner membrane. This is Protease HtpX homolog from Bordetella avium (strain 197N).